The sequence spans 229 residues: Clathrin light chain B (229 aa).

Low complexity-rich tracts occupy residues 1 to 17 (MAED…GAPE) and 45 to 58 (GAPA…AQPG). Positions 1–70 (MAEDFGFFSS…SGAGSEDMST (70 aa)) are disordered. Residues S11 and S13 each carry the phosphoserine modification. The tract at residues 93 to 155 (ADRLTQEPES…QVEKNKINNR (63 aa)) is involved in binding clathrin heavy chain. Residue T187 is modified to Phosphothreonine. An intrachain disulfide couples C199 to C209. The residue at position 204 (K204) is an N6-acetyllysine. At S217 the chain carries Phosphoserine.

The protein belongs to the clathrin light chain family. In terms of assembly, clathrin coats are formed from molecules containing 3 heavy chains and 3 light chains. Interacts (via N-terminus) with HIP1. Interacts with HIP1R.

Its subcellular location is the cytoplasmic vesicle membrane. The protein localises to the membrane. It localises to the coated pit. Its function is as follows. Clathrin is the major protein of the polyhedral coat of coated pits and vesicles. This Mus musculus (Mouse) protein is Clathrin light chain B (Cltb).